The primary structure comprises 300 residues: Metal tolerance protein 12 (300 aa).

Topologically, residues 1–26 (MESPESFSTMFMKPIRHILSEKKSRK) are cytoplasmic. The chain crosses the membrane as a helical span at residues 27 to 47 (IALFLLINTAYMVVEFVAGFM). Residues 48–50 (SNS) lie on the Vacuolar side of the membrane. Residues 51–71 (LGLISDACHMLFDCAALAIGL) traverse the membrane as a helical segment. Over 72 to 91 (YASYISRLPANHQYNYGRGR) the chain is Cytoplasmic. Residues 92 to 112 (FEVLSGYVNAVFLVLVGALIV) form a helical membrane-spanning segment. At 113–128 (LESIERILDPQEISTN) the chain is on the vacuolar side. A helical transmembrane segment spans residues 129–149 (SLLVVSVGGLLVNIVGLIFFH). Topologically, residues 150–160 (EEHHHAHGGSG) are cytoplasmic. A helical transmembrane segment spans residues 161-181 (IFLHVLADTMGSVGVVISTLL). Over 182-186 (IKYKG) the chain is Vacuolar. A helical transmembrane segment spans residues 187–207 (WLVADPASSIFISILIIASVI). Topologically, residues 208–300 (PLLRNSAEIL…WTLQVESVNS (93 aa)) are cytoplasmic.

It belongs to the cation diffusion facilitator (CDF) transporter (TC 2.A.4) family. SLC30A subfamily.

The protein localises to the vacuole membrane. Its function is as follows. Involved in sequestration of excess metal in the cytoplasm into vacuoles to maintain metal homeostasis. This Arabidopsis thaliana (Mouse-ear cress) protein is Metal tolerance protein 12 (MTP12).